A 298-amino-acid polypeptide reads, in one-letter code: Cation-efflux pump FieF (298 aa).

The helical transmembrane segment at 24-44 threads the bilayer; sequence LLIKIFAWWYTGSVSILAALV. Zn(2+) is bound by residues Asp45 and Asp49. The next 2 membrane-spanning stretches (helical) occupy residues 80 to 100 and 112 to 132; these read SLAA…LTSI and PGVG…LVTF. Residues His151 and Asp155 each coordinate Zn(2+). The next 2 membrane-spanning stretches (helical) occupy residues 154–174 and 176–196; these read SDVM…YGWH and ADAL…LRMG.

Belongs to the cation diffusion facilitator (CDF) transporter (TC 2.A.4) family. FieF subfamily. As to quaternary structure, homodimer.

It localises to the cell inner membrane. It catalyses the reaction Zn(2+)(in) + H(+)(out) = Zn(2+)(out) + H(+)(in). The enzyme catalyses Cd(2+)(in) + H(+)(out) = Cd(2+)(out) + H(+)(in). The catalysed reaction is Fe(2+)(in) + H(+)(out) = Fe(2+)(out) + H(+)(in). In terms of biological role, divalent metal cation transporter which exports Zn(2+), Cd(2+) and possibly Fe(2+). May be involved in zinc and iron detoxification by efflux. In Salmonella typhi, this protein is Cation-efflux pump FieF.